The primary structure comprises 185 residues: Ribosome-recycling factor (185 aa).

Belongs to the RRF family.

It is found in the cytoplasm. Responsible for the release of ribosomes from messenger RNA at the termination of protein biosynthesis. May increase the efficiency of translation by recycling ribosomes from one round of translation to another. The sequence is that of Ribosome-recycling factor from Desulforapulum autotrophicum (strain ATCC 43914 / DSM 3382 / VKM B-1955 / HRM2) (Desulfobacterium autotrophicum).